A 420-amino-acid chain; its full sequence is Phytoene synthase 1, chloroplastic (420 aa).

The transit peptide at 1 to 70 (MAAITLLRSA…GEIARTSPVY (70 aa)) directs the protein to the chloroplast.

It belongs to the phytoene/squalene synthase family. Expressed in leaves. Highly expressed in developing leaves. Expressed at low levels in roots.

The protein resides in the plastid. It localises to the chloroplast membrane. The protein localises to the chloroplast. It is found in the plastoglobule. It catalyses the reaction 2 (2E,6E,10E)-geranylgeranyl diphosphate = 15-cis-phytoene + 2 diphosphate. Functionally, catalyzes the conversion of geranylgeranyl diphosphate to phytoene. Mediates the first committed step in carotenoid biosynthesis. In Oryza sativa subsp. japonica (Rice), this protein is Phytoene synthase 1, chloroplastic.